A 129-amino-acid polypeptide reads, in one-letter code: Large ribosomal subunit protein bL17 (129 aa).

It belongs to the bacterial ribosomal protein bL17 family. In terms of assembly, part of the 50S ribosomal subunit. Contacts protein L32.

This is Large ribosomal subunit protein bL17 from Yersinia enterocolitica serotype O:8 / biotype 1B (strain NCTC 13174 / 8081).